Consider the following 285-residue polypeptide: 2-dehydro-3-deoxyphosphooctonate aldolase (285 aa).

Belongs to the KdsA family.

The protein localises to the cytoplasm. It carries out the reaction D-arabinose 5-phosphate + phosphoenolpyruvate + H2O = 3-deoxy-alpha-D-manno-2-octulosonate-8-phosphate + phosphate. It functions in the pathway carbohydrate biosynthesis; 3-deoxy-D-manno-octulosonate biosynthesis; 3-deoxy-D-manno-octulosonate from D-ribulose 5-phosphate: step 2/3. Its pathway is bacterial outer membrane biogenesis; lipopolysaccharide biosynthesis. This chain is 2-dehydro-3-deoxyphosphooctonate aldolase, found in Leptothrix cholodnii (strain ATCC 51168 / LMG 8142 / SP-6) (Leptothrix discophora (strain SP-6)).